The sequence spans 317 residues: Aspartate carbamoyltransferase catalytic subunit (317 aa).

2 residues coordinate carbamoyl phosphate: arginine 66 and threonine 67. Residue lysine 94 coordinates L-aspartate. 3 residues coordinate carbamoyl phosphate: arginine 116, histidine 144, and glutamine 147. L-aspartate is bound by residues arginine 177 and arginine 231. Carbamoyl phosphate is bound by residues glycine 272 and proline 273.

Belongs to the aspartate/ornithine carbamoyltransferase superfamily. ATCase family. In terms of assembly, heterododecamer (2C3:3R2) of six catalytic PyrB chains organized as two trimers (C3), and six regulatory PyrI chains organized as three dimers (R2).

It carries out the reaction carbamoyl phosphate + L-aspartate = N-carbamoyl-L-aspartate + phosphate + H(+). The protein operates within pyrimidine metabolism; UMP biosynthesis via de novo pathway; (S)-dihydroorotate from bicarbonate: step 2/3. Functionally, catalyzes the condensation of carbamoyl phosphate and aspartate to form carbamoyl aspartate and inorganic phosphate, the committed step in the de novo pyrimidine nucleotide biosynthesis pathway. The chain is Aspartate carbamoyltransferase catalytic subunit from Rhodopseudomonas palustris (strain HaA2).